The sequence spans 106 residues: Toxin-like structure LSTX-D4 (106 aa).

An N-terminal signal peptide occupies residues 1-20 (MMKVLVVVALLVTLISYSSS). A propeptide spanning residues 21–41 (EGIGDLEADELLSLMANEQTR) is cleaved from the precursor. 4 disulfide bridges follow: cysteine 45-cysteine 60, cysteine 52-cysteine 69, cysteine 59-cysteine 85, and cysteine 71-cysteine 83.

It belongs to the neurotoxin 19 (CSTX) family. 02 (D7) subfamily. As to expression, expressed by the venom gland.

The protein localises to the secreted. The chain is Toxin-like structure LSTX-D4 from Lycosa singoriensis (Wolf spider).